Consider the following 383-residue polypeptide: MSKQKVVVGMSGGVDSSVTAWLLKEQGYDVVGLFMKNWEDDDDSEYCSTRQDWIDVVSVADLIGIDVEAVNFAAEYKDRVFAEFLREYSAGRTPNPDVLCNAEIKFKAFLDHAMSLGAETIATGHYARVRQNERNGRFELLKAFDHTKDQSYFLHRLNQAQLSKTLFPLGEIPKTKVREIAEQIALPNAKKKDSTGICFIGERPFRDFLNRYLPTKPGPMKTTDGKVVGEHIGLAFYTFGQRKGIGLGGSKDGSGEPWFVAGKDIASNTLYVAQGHDHAWLLSHTLSAGNTSWVAGEPPADGFACGAKTRYRQADAPCTFSSAGSGEGLFELNFDAAQWAVTPGQSAVLYDGDVCLGGGIIEHAVTGQPVAREPQKAALLNAR.

Residues 9-16 (GMSGGVDS) and Met-35 each bind ATP. The segment at 95-97 (NPD) is interaction with target base in tRNA. Cys-100 serves as the catalytic Nucleophile. A disulfide bond links Cys-100 and Cys-198. Gly-124 contributes to the ATP binding site. An interaction with tRNA region spans residues 148-150 (KDQ). Residue Cys-198 is the Cysteine persulfide intermediate of the active site. An interaction with tRNA region spans residues 310–311 (RY).

It belongs to the MnmA/TRMU family.

It localises to the cytoplasm. It catalyses the reaction S-sulfanyl-L-cysteinyl-[protein] + uridine(34) in tRNA + AH2 + ATP = 2-thiouridine(34) in tRNA + L-cysteinyl-[protein] + A + AMP + diphosphate + H(+). Its function is as follows. Catalyzes the 2-thiolation of uridine at the wobble position (U34) of tRNA, leading to the formation of s(2)U34. The polypeptide is tRNA-specific 2-thiouridylase MnmA (Paraburkholderia phytofirmans (strain DSM 17436 / LMG 22146 / PsJN) (Burkholderia phytofirmans)).